Reading from the N-terminus, the 365-residue chain is DNA replication and repair protein RecF (365 aa).

30–37 (GQNGSGKT) contributes to the ATP binding site.

This sequence belongs to the RecF family.

It localises to the cytoplasm. The RecF protein is involved in DNA metabolism; it is required for DNA replication and normal SOS inducibility. RecF binds preferentially to single-stranded, linear DNA. It also seems to bind ATP. The polypeptide is DNA replication and repair protein RecF (Shewanella woodyi (strain ATCC 51908 / MS32)).